A 329-amino-acid polypeptide reads, in one-letter code: 3-dehydroquinate synthase (329 aa).

It belongs to the archaeal-type DHQ synthase family.

It carries out the reaction 2-amino-2,3,7-trideoxy-D-lyxo-hept-6-ulosonate + NAD(+) + H2O = 3-dehydroquinate + NH4(+) + NADH + H(+). In terms of biological role, catalyzes the oxidative deamination and cyclization of 2-amino-3,7-dideoxy-D-threo-hept-6-ulosonic acid (ADH) to yield 3-dehydroquinate (DHQ), which is fed into the canonical shikimic pathway of aromatic amino acid biosynthesis. The sequence is that of 3-dehydroquinate synthase from Methanoregula boonei (strain DSM 21154 / JCM 14090 / 6A8).